The following is a 321-amino-acid chain: Lipoyl synthase (321 aa).

[4Fe-4S] cluster-binding residues include cysteine 68, cysteine 73, cysteine 79, cysteine 94, cysteine 98, cysteine 101, and serine 308. The 218-residue stretch at 80-297 folds into the Radical SAM core domain; it reads FNHGTATFMI…KAEALAMGFT (218 aa).

This sequence belongs to the radical SAM superfamily. Lipoyl synthase family. Requires [4Fe-4S] cluster as cofactor.

Its subcellular location is the cytoplasm. The catalysed reaction is [[Fe-S] cluster scaffold protein carrying a second [4Fe-4S](2+) cluster] + N(6)-octanoyl-L-lysyl-[protein] + 2 oxidized [2Fe-2S]-[ferredoxin] + 2 S-adenosyl-L-methionine + 4 H(+) = [[Fe-S] cluster scaffold protein] + N(6)-[(R)-dihydrolipoyl]-L-lysyl-[protein] + 4 Fe(3+) + 2 hydrogen sulfide + 2 5'-deoxyadenosine + 2 L-methionine + 2 reduced [2Fe-2S]-[ferredoxin]. It functions in the pathway protein modification; protein lipoylation via endogenous pathway; protein N(6)-(lipoyl)lysine from octanoyl-[acyl-carrier-protein]: step 2/2. In terms of biological role, catalyzes the radical-mediated insertion of two sulfur atoms into the C-6 and C-8 positions of the octanoyl moiety bound to the lipoyl domains of lipoate-dependent enzymes, thereby converting the octanoylated domains into lipoylated derivatives. This is Lipoyl synthase from Salmonella arizonae (strain ATCC BAA-731 / CDC346-86 / RSK2980).